Consider the following 449-residue polypeptide: G-protein coupled receptor 61 (449 aa).

Low complexity predominate over residues 1 to 14 (MESSPIPQSSGNSS). The tract at residues 1 to 29 (MESSPIPQSSGNSSTLGRALQTPGPSTAS) is disordered. Topologically, residues 1 to 44 (MESSPIPQSSGNSSTLGRALQTPGPSTASGVPELGLRDVASESV) are extracellular. An N-linked (GlcNAc...) asparagine glycan is attached at asparagine 12. Residues 45-67 (ALFFMLLLDLTAVAGNAAVMAVI) traverse the membrane as a helical segment. The Cytoplasmic portion of the chain corresponds to 68 to 75 (AKTPALRK). The helical transmembrane segment at 76-98 (FVFVFHLCLVDLLAALTLMPLAM) threads the bilayer. The Extracellular portion of the chain corresponds to 99 to 112 (LSSSALFDHALFGE). A helical membrane pass occupies residues 113–135 (VACRLYLFLSVCFVSLAILSVSA). The Cytoplasmic segment spans residues 136–155 (INVERYYYVVHPMRYEVRMT). The chain crosses the membrane as a helical span at residues 156–178 (LGLVASVLVGVWVKALAMASVPV). The Extracellular portion of the chain corresponds to 179-206 (LGRVYWEEGAPSVNPGCSLQWSHSAYCQ). Residues 207 to 229 (LFVVVFAVLYFLLPLILIFVVYC) traverse the membrane as a helical segment. Topologically, residues 230 to 287 (SMFRVARVAAMQHGPLPTWMETPRQRSESLSSRSTMVTSSGAHQTTPHRTFGGGKAAV) are cytoplasmic. Residues 288–310 (VLLAVGGQFLLCWLPYFSFHLYV) traverse the membrane as a helical segment. Over 311 to 324 (ALSAQPISAGQVEN) the chain is Extracellular. A helical transmembrane segment spans residues 325-344 (VVTWIGYFCFTSNPFFYGCL). At 345 to 449 (NRQIRGELSK…RPAPSPRLES (105 aa)) the chain is on the cytoplasmic side.

This sequence belongs to the G-protein coupled receptor 1 family. As to quaternary structure, forms heterodimer with MTNR1B. Interacts with ARRB1 and ARRB2 in a spontaneous and agonist-independent manner; leading to the internalization of GPR61 in the endosomal compartment. Predominantly expressed in the brain and testes, with relatively lower expression observed in the eye, adrenal gland and pituitary gland.

The protein resides in the cell membrane. It is found in the endosome membrane. Functionally, orphan G-protein coupled receptor. Constitutively activates the G(s)-alpha/cAMP signaling pathway. Shows a reciprocal regulatory interaction with the melatonin receptor MTNR1B most likely through receptor heteromerization. May be involved in the regulation of food intake and body weight. This Mus musculus (Mouse) protein is G-protein coupled receptor 61 (Gpr61).